Consider the following 201-residue polypeptide: NADH-quinone oxidoreductase subunit C (201 aa).

Belongs to the complex I 30 kDa subunit family. In terms of assembly, NDH-1 is composed of 14 different subunits. Subunits NuoB, C, D, E, F, and G constitute the peripheral sector of the complex.

It localises to the cell inner membrane. The catalysed reaction is a quinone + NADH + 5 H(+)(in) = a quinol + NAD(+) + 4 H(+)(out). In terms of biological role, NDH-1 shuttles electrons from NADH, via FMN and iron-sulfur (Fe-S) centers, to quinones in the respiratory chain. The immediate electron acceptor for the enzyme in this species is believed to be ubiquinone. Couples the redox reaction to proton translocation (for every two electrons transferred, four hydrogen ions are translocated across the cytoplasmic membrane), and thus conserves the redox energy in a proton gradient. The chain is NADH-quinone oxidoreductase subunit C from Azoarcus sp. (strain BH72).